The primary structure comprises 48 residues: Large ribosomal subunit protein bL33A (48 aa).

This sequence belongs to the bacterial ribosomal protein bL33 family.

The polypeptide is Large ribosomal subunit protein bL33A (Bacillus anthracis).